Here is a 438-residue protein sequence, read N- to C-terminus: Ribosome biogenesis protein NOP53 (438 aa).

2 disordered regions span residues 1–23 and 247–346; these read MVAGKRTGAAKGSRHNKKYWRKG and HPKY…RKKE. The span at 12 to 21 shows a compositional bias: basic residues; it reads GSRHNKKYWR. Composition is skewed to basic and acidic residues over residues 265 to 288, 297 to 318, and 325 to 346; these read KSMKTGGEAEPKSQRVECDRMTKE, QKLDKEEKRRLEEKAKEQDSHN, and LHKELDEEEKQRHEESEVRKKE.

This sequence belongs to the NOP53 family.

It localises to the nucleus. The protein localises to the nucleolus. Its subcellular location is the nucleoplasm. Its function is as follows. May play a role in ribosome biogenesis, being required for integration of the 5S RNP into the ribosomal large subunit. The protein is Ribosome biogenesis protein NOP53 of Caenorhabditis elegans.